A 453-amino-acid chain; its full sequence is Gamma-glutamylpolyamine synthetase GlnA2 (453 aa).

The region spanning 15-100 (RDIRFVRLWF…MFCDILMPDG (86 aa)) is the GS beta-grasp domain. Residues 107–453 (PRYVLKRALA…FELRKSLPVL (347 aa)) form the GS catalytic domain. Mg(2+) is bound by residues Glu130 and Glu132. Glu182 is an ATP binding site. Mg(2+)-binding residues include Glu187 and Glu194. Position 239 (Gly239) interacts with L-glutamate. Residue His243 coordinates Mg(2+). 245–247 (HLS) is an ATP binding site. Arg296, Glu310, and Arg322 together coordinate L-glutamate. 2 residues coordinate ATP: Arg322 and Arg327. Residue Glu342 participates in Mg(2+) binding. Arg344 provides a ligand contact to L-glutamate.

It belongs to the glutamine synthetase family. It depends on Mg(2+) as a cofactor.

It carries out the reaction putrescine + L-glutamate + ATP = gamma-L-glutamylputrescine + ADP + phosphate + H(+). It catalyses the reaction spermine + L-glutamate + ATP = gamma-L-glutamylspermine + ADP + phosphate + H(+). The catalysed reaction is spermidine + L-glutamate + ATP = gamma-L-glutamylspermidine + ADP + phosphate + H(+). The enzyme catalyses cadaverine + L-glutamate + ATP = gamma-L-glutamylcadaverine + ADP + phosphate + H(+). It participates in amine and polyamine degradation; putrescine degradation. Its pathway is amine and polyamine degradation; spermidine degradation. It functions in the pathway amine and polyamine degradation; spermine degradation. Its activity is regulated as follows. No effect on activity with glutamine synthetase (GS) inhibitor methionine sulfoximine (MSO). In terms of biological role, involved in the catabolism of polyamines. Catalyzes the ATP-dependent gamma-glutamylation of polyamines. Substrates include putrescine, cadaverine, spermidine and spermine, with a preference for short-chain polyamine putrescine. No complementation of the L-glutamine auxotrophy of an E.coli glnA mutant. Together with GlnA3, enables survival of S.coelicolor under exposure to high local environmental polyamine concentrations, which is toxic to the cells. This chain is Gamma-glutamylpolyamine synthetase GlnA2, found in Streptomyces coelicolor (strain ATCC BAA-471 / A3(2) / M145).